The sequence spans 415 residues: Histidine--tRNA ligase (415 aa).

The protein belongs to the class-II aminoacyl-tRNA synthetase family. As to quaternary structure, homodimer.

It is found in the cytoplasm. The catalysed reaction is tRNA(His) + L-histidine + ATP = L-histidyl-tRNA(His) + AMP + diphosphate + H(+). The polypeptide is Histidine--tRNA ligase (Rickettsia felis (strain ATCC VR-1525 / URRWXCal2) (Rickettsia azadi)).